Here is a 455-residue protein sequence, read N- to C-terminus: MEVENRPNTYDFSKRDKLLSNRFYEENSLQDETDDGGERWCLICGDRASGLHYGIISCEGCKGFFKRSICNKRIYRCNRDKNCQMSRKQRNRCQYCRLQKCLQMGMNRKAIREDGMPGGRNKMIGPVHISLEEIERLMSGQEFKEGSDLSDSWSHGYSNHSSPGNSLSEGGQSLSFSSSRSVSCRDECISPQLTHTFLMCKYPLPPPTGSILKTQTHTLTGQILADEDLTPLTTPMLIEDGYSVTQSELLALLCGIADELLFRQIVWLKRLPFFTDLSIKDCTRLLGSSWHQLILLSSITVHSAQILGELANVTHHYTPSSHTLQRFGEDAMEVMESLNFLFRKFHQLNISNEEYSCLKTITLLNQETTGLCNTSMLKQLSERYWTLCRELTERLHPQRPKRFSDIITCLTEIRHTSGKMMSIPLEQLPLLFKAVLYSCTTNQNPWLPKSSTSRT.

Positions 38–113 (ERWCLICGDR…MGMNRKAIRE (76 aa)) form a DNA-binding region, nuclear receptor. NR C4-type zinc fingers lie at residues 41–61 (CLIC…CEGC) and 77–96 (CNRD…CQYC). The tract at residues 145–173 (EGSDLSDSWSHGYSNHSSPGNSLSEGGQS) is disordered. A compositionally biased stretch (polar residues) spans 149–165 (LSDSWSHGYSNHSSPGN). An NR LBD domain is found at 215 to 446 (QTHTLTGQIL…YSCTTNQNPW (232 aa)).

It belongs to the nuclear hormone receptor family. NR6 subfamily. Homodimer.

It localises to the nucleus. Its function is as follows. Probable orphan nuclear receptor. Binds to a response element containing repeats of the motif 5'-AGGTCA-3'. The protein is Nuclear receptor subfamily 6 group A member 1-B of Danio rerio (Zebrafish).